A 1356-amino-acid polypeptide reads, in one-letter code: Fibronectin type III domain containing protein 3C1 (1356 aa).

Disordered regions lie at residues 303-341, 356-402, and 428-452; these read PRNM…SDNN, TYDE…SDVA, and NQKK…QPGC. Over residues 308-341 the composition is skewed to low complexity; that stretch reads DNIPDTNTTDTITSSSAHTPSISTSNATFCSDNN. Residues 370 to 393 show a composition bias toward polar residues; it reads PSCTSQSASNPSVSENAHNPSSIN. The span at 439-448 shows a compositional bias: basic and acidic residues; the sequence is LKEHNTEDRT. Fibronectin type-III domains follow at residues 454 to 549, 553 to 648, 650 to 741, and 745 to 842; these read NIEK…TPGC, PPLA…TPPA, LPPK…TRPA, and CPNK…TLPP. The span at 825–838 shows a compositional bias: polar residues; the sequence is GQSRPSDVLTIQTP. A disordered region spans residues 825–894; sequence GQSRPSDVLT…QDRKVHPSSE (70 aa). The span at 883 to 894 shows a compositional bias: basic and acidic residues; it reads PHQDRKVHPSSE. Fibronectin type-III domains follow at residues 914-1007, 1017-1103, 1104-1199, and 1202-1299; these read PPSQ…TPGT, EVES…TKPL, PPEP…TKSP, and ALKA…TYKH. The interval 1299–1320 is disordered; it reads HHSGHGKGSGSKGKGNHNDKGE. Residues 1330-1350 form a helical membrane-spanning segment; that stretch reads TFVLTLLIGFALIAVLCAVAV. Residues 1351 to 1356 are Cytoplasmic-facing; sequence QYLLIN.

Belongs to the FNDC3 family.

Its subcellular location is the membrane. The polypeptide is Fibronectin type III domain containing protein 3C1 (Fndc3c1) (Mus musculus (Mouse)).